We begin with the raw amino-acid sequence, 218 residues long: Ras-related protein R-Ras (218 aa).

A disordered region spans residues 1 to 30; the sequence is MSSGAASGTGRGRPRGGGPGPRDPPPGETH. Residues 7–20 show a composition bias toward gly residues; the sequence is SGTGRGRPRGGGPG. 36 to 44 contributes to the GTP binding site; sequence GGGGVGKSA. The short motif at 58 to 66 is the Effector region element; the sequence is YDPTIEDSY. GTP-binding positions include 83 to 87, 142 to 145, and 172 to 174; these read DTAGQ, NKAD, and SAK. C215 carries the post-translational modification Cysteine methyl ester. C215 is lipidated: S-geranylgeranyl cysteine. Positions 216 to 218 are cleaved as a propeptide — removed in mature form; sequence VLL.

This sequence belongs to the small GTPase superfamily. Ras family. In terms of assembly, interacts with PLCE1. Interacts (active GTP-bound form preferentially) with RGS14. Interacts with OSBPL3. Interacts with ZDHHC19. Post-translationally, S-palmitoylated by ZDHHC19, leading to increased association with membranes and with rafts/caveolae as well as enhanced cell viability.

It localises to the cell membrane. It catalyses the reaction GTP + H2O = GDP + phosphate + H(+). Its function is as follows. GTP-binding protein with GTPase activity, likely involved in the regulation of MAPK signaling pathway and thereby controlling multiple cellular processes. Regulates the organization of the actin cytoskeleton. With OSPBL3, modulates integrin beta-1 (ITGB1) activity. In Rattus norvegicus (Rat), this protein is Ras-related protein R-Ras (Rras).